The sequence spans 378 residues: IDS-type sesquiterpene synthase (378 aa).

Residues Asp120 and Asp124 each coordinate Mg(2+). Residues 120–124 (DDYVD) carry the DDXXD motif motif.

The protein belongs to the terpene synthase family. Mg(2+) is required as a cofactor. Highly expressed in male epidermal tissue associated with the cuticle of ventral sternites.

It catalyses the reaction (2Z,6E)-farnesyl diphosphate = (Z)-alpha-bisabolene + diphosphate. The protein operates within pheromone biosynthesis. Sesquiterpene alcohol synthase that catalyzes the formation of the pheromone precursor (Z)-alpha-bisabolene from (2Z,6E)-farnesyl diphosphate. The sequence is that of IDS-type sesquiterpene synthase from Nezara viridula (Southern green stink bug).